A 603-amino-acid polypeptide reads, in one-letter code: Elongation factor 4 (603 aa).

In terms of domain architecture, tr-type G spans 2-184; it reads NHIRNFSIIA…AVVALIPAPK (183 aa). GTP contacts are provided by residues 14–19 and 131–134; these read DHGKST and NKMD.

The protein belongs to the TRAFAC class translation factor GTPase superfamily. Classic translation factor GTPase family. LepA subfamily.

The protein localises to the cell inner membrane. The catalysed reaction is GTP + H2O = GDP + phosphate + H(+). Required for accurate and efficient protein synthesis under certain stress conditions. May act as a fidelity factor of the translation reaction, by catalyzing a one-codon backward translocation of tRNAs on improperly translocated ribosomes. Back-translocation proceeds from a post-translocation (POST) complex to a pre-translocation (PRE) complex, thus giving elongation factor G a second chance to translocate the tRNAs correctly. Binds to ribosomes in a GTP-dependent manner. This Polaromonas naphthalenivorans (strain CJ2) protein is Elongation factor 4.